A 130-amino-acid polypeptide reads, in one-letter code: Small ribosomal subunit protein uS9 (130 aa).

The interval 98–130 (LKRAGLLTRDPRMKERKKPGLKKARRSPQFSKR) is disordered. Over residues 111–130 (KERKKPGLKKARRSPQFSKR) the composition is skewed to basic residues.

It belongs to the universal ribosomal protein uS9 family.

This Staphylococcus epidermidis (strain ATCC 35984 / DSM 28319 / BCRC 17069 / CCUG 31568 / BM 3577 / RP62A) protein is Small ribosomal subunit protein uS9.